We begin with the raw amino-acid sequence, 875 residues long: Alanine--tRNA ligase (875 aa).

Residues His564, His568, Cys666, and His670 each coordinate Zn(2+).

It belongs to the class-II aminoacyl-tRNA synthetase family. As to quaternary structure, homotetramer. Zn(2+) is required as a cofactor.

It is found in the cytoplasm. The catalysed reaction is tRNA(Ala) + L-alanine + ATP = L-alanyl-tRNA(Ala) + AMP + diphosphate. Functionally, catalyzes the attachment of alanine to tRNA(Ala) in a two-step reaction: alanine is first activated by ATP to form Ala-AMP and then transferred to the acceptor end of tRNA(Ala). Also edits incorrectly charged Ser-tRNA(Ala) and Gly-tRNA(Ala) via its editing domain. The protein is Alanine--tRNA ligase of Sodalis glossinidius (strain morsitans).